Reading from the N-terminus, the 2097-residue chain is 1-phosphatidylinositol 3-phosphate 5-kinase (2097 aa).

The interval 1–44 is disordered; it reads MATDDKSSPTLDSANDLPRSPASPSHLTHFKPLTPDQDEPPFKS. Ala2 is subject to N-acetylalanine. A phosphoserine; by autocatalysis mark is found at Ser23 and Ser48. The segment at 56 to 122 is disordered; it reads NKERGEGGQG…AEPACGGHDP (67 aa). Low complexity predominate over residues 66–81; it reads EQQSPSSSWASPQIPS. Phosphoserine is present on Ser88. The FYVE-type zinc-finger motif lies at 158-218; that stretch reads DSQCKECYDC…ACTYCRKIAL (61 aa). The Zn(2+) site is built by Cys164, Cys167, Cys180, Cys183, Cys188, Cys191, Cys210, and Cys213. Ser299, Ser307, and Ser312 each carry phosphoserine. Ser318 is modified (phosphoserine; by PKB/AKT1 or PKB/AKT2). Residue Ser329 is modified to Phosphoserine. The DEP domain occupies 365–440; it reads HTSGMEFQDH…DEYALYRPLQ (76 aa). Positions 442–459 are enriched in polar residues; sequence TEFSETPSPDSDSVNSVE. Residues 442–469 form a disordered region; that stretch reads TEFSETPSPDSDSVNSVEGHSEPSWFKD. The span at 460–469 shows a compositional bias: basic and acidic residues; that stretch reads GHSEPSWFKD. Phosphoserine is present on Ser475. The segment at 484 to 505 is disordered; the sequence is GDDNLANSASPSKRTSVSSFQS. Over residues 488–505 the composition is skewed to polar residues; sequence LANSASPSKRTSVSSFQS. The interval 616–868 is chaperonin-like domain; it reads MMALLQQLLQ…MICVAYHSQL (253 aa). 4 disordered regions span residues 895 to 928, 989 to 1022, 1171 to 1194, and 1511 to 1555; these read GRGE…EDST, AVGN…QDDT, HSKD…EERG, and FQQE…HNGE. Over residues 902–912 the composition is skewed to polar residues; it reads SQEQVSGSSLP. Residues 1175-1184 show a composition bias toward polar residues; the sequence is ASCTSGGKSG. The span at 1185–1194 shows a compositional bias: basic and acidic residues; sequence NKTESDEERG. A phosphoserine mark is found at Ser1543 and Ser1548. Ser1668 carries the phosphoserine; by autocatalysis modification. A disordered region spans residues 1697–1742; the sequence is EGLPANSALDNRPKSSSPIRLPEISGGQTNRTVEAEPQPTKKASGM. Ser1753 bears the Phosphoserine mark. A PIPK domain is found at 1757-2083; sequence SSQKRETLRG…RFCEAMDKYF (327 aa). Residues 1781–1800 form a disordered region; that stretch reads GLESQGLEPQDEVDGGDTQK. Residues 1841 to 2097 are catalytic; the sequence is EEEFIRSLSH…DHWTGLDLNC (257 aa). Phosphoserine; by autocatalysis is present on residues Ser1968 and Ser2052.

In terms of assembly, component of the PI(3,5)P2 regulatory complex/PAS complex, at least composed of PIKFYVE, FIG4 and VAC14. VAC14 nucleates the assembly of the complex and serves as a scaffold by pentamerizing into a star-shaped structure, which can bind a single copy each of PIKFYVE and FIG4 and coordinates their activities. Interacts (via chaperonin-like domain) with RABEPK; the interaction recruits RABEPK to the endosomal membrane. Interacts with SPAG9. Interacts with EGFR. Requires Mn(2+) as cofactor. Phosphorylated in response to insulin at Ser-318 in a protein kinase B (PKB)-dependent manner. Autophosphorylates which down-regulates lipid product formation. In terms of processing, autophosphorylates which inhibits its own phosphatidylinositol 3-phosphate 5-kinase activity, stimulates FIG4 lipid phosphatase activity and down-regulates lipid product formation. Dephosphorylated by FIG4 in the PI(3,5)P2 regulatory complex, at Ser-48, Ser-1668 and Ser-2052. Phosphorylated in response to insulin at Ser-318 in a protein kinase B (PKB)-dependent manner. As to expression, ubiquitous.

It is found in the endosome membrane. The protein resides in the early endosome membrane. It localises to the cytoplasmic vesicle. Its subcellular location is the phagosome membrane. The protein localises to the late endosome membrane. The enzyme catalyses a 1,2-diacyl-sn-glycero-3-phospho-(1D-myo-inositol-3-phosphate) + ATP = a 1,2-diacyl-sn-glycero-3-phospho-(1D-myo-inositol-3,5-bisphosphate) + ADP + H(+). The catalysed reaction is a 1,2-diacyl-sn-glycero-3-phospho-(1D-myo-inositol) + ATP = a 1,2-diacyl-sn-glycero-3-phospho-(1D-myo-inositol-5-phosphate) + ADP + H(+). It carries out the reaction L-seryl-[protein] + ATP = O-phospho-L-seryl-[protein] + ADP + H(+). Inhibited by apilimod and YM201636. Dual specificity kinase implicated in myriad essential cellular processes such as maintenance of endomembrane homeostasis, and endocytic-vacuolar pathway, lysosomal trafficking, nuclear transport, stress- or hormone-induced signaling and cell cycle progression. The PI(3,5)P2 regulatory complex regulates both the synthesis and turnover of phosphatidylinositol 3,5-bisphosphate (PtdIns(3,5)P2). Sole enzyme to catalyze the phosphorylation of phosphatidylinositol 3-phosphate on the fifth hydroxyl of the myo-inositol ring, to form (PtdIns(3,5)P2). Also catalyzes the phosphorylation of phosphatidylinositol on the fifth hydroxyl of the myo-inositol ring, to form phosphatidylinositol 5-phosphate (PtdIns(5)P). Has serine-protein kinase activity and is able to autophosphorylate and transphosphorylate. Autophosphorylation inhibits its own phosphatidylinositol 3-phosphate 5-kinase activity, stimulates FIG4 lipid phosphatase activity and down-regulates lipid product formation. Involved in key endosome operations such as fission and fusion in the course of endosomal cargo transport. Required for the maturation of early into late endosomes, phagosomes and lysosomes. Regulates vacuole maturation and nutrient recovery following engulfment of macromolecules, initiates the redistribution of accumulated lysosomal contents back into the endosome network. Critical regulator of the morphology, degradative activity, and protein turnover of the endolysosomal system in macrophages and platelets. In neutrophils, critical to perform chemotaxis, generate ROS, and undertake phagosome fusion with lysosomes. Plays a key role in the processing and presentation of antigens by major histocompatibility complex class II (MHC class II) mediated by CTSS. Regulates melanosome biogenesis by controlling the delivery of proteins from the endosomal compartment to the melanosome. Essential for systemic glucose homeostasis, mediates insulin-induced signals for endosome/actin remodeling in the course of GLUT4 translocation/glucose uptake activation. Supports microtubule-based endosome-to-trans-Golgi network cargo transport, trhough association with SPAG9 and RABEPK. Mediates EGFR trafficking to the nucleus. This is 1-phosphatidylinositol 3-phosphate 5-kinase from Mus musculus (Mouse).